An 879-amino-acid chain; its full sequence is Probable phospholipid transport protein YdbH (879 aa).

At 1-6 (MLGKYK) the chain is on the cytoplasmic side. Residues 7-29 (AVLALLLLIILVPLTLLMTLGLW) traverse the membrane as a helical segment. Residues 30–879 (VPTLAGIWLP…PQGKECEEKQ (850 aa)) lie on the Periplasmic side of the membrane.

In terms of assembly, interacts with the outer membrane lipoprotein YnbE.

It is found in the cell inner membrane. Its function is as follows. Involved in outer membrane lipid homeostasis. Interacts with the outer membrane lipoprotein YnbE to form a functional protein bridge connecting the inner and outer membranes of the cell. Likely transports phospholipids between the inner membrane and the outer membrane. It would provide a bridge-like structure that protects phospholipids as they travel across the periplasm. Functionally, tamB, YdbH and YhdP are redundant, but not equivalent, in performing an essential function for growth and maintaining lipid homeostasis in the outer membrane. Any of these three proteins is sufficient for growth. In Escherichia coli (strain K12), this protein is Probable phospholipid transport protein YdbH (ydbH).